A 313-amino-acid chain; its full sequence is MGLKGFAEGGIASIVAGCSTHPLDLIKVRMQLQGESAPIQTNLRPALAFQTSTTVNAPPLRVGVIGVGSRLIREEGMRALFSGVSATVLRQTLYSTTRMGLYDIIKGEWTDPETKTMPLMKKIGAGAIAGAIGAAVGNPADVAMVRMQADGRLPLTDRRNYKSVLDAITQMIRGEGVTSLWRGSSLTINRAMLVTSSQLASYDSVKETILEKGLLKDGLGTHVSASFAAGFVASVASNPVDVIKTRVMNMKVVAGVAPPYKGAVDCALKTVKAEGIMSLYKGFIPTVSRQAPFTVVLFVTLEQVKKLFKDYDF.

Solcar repeat units follow at residues 4–108, 117–208, and 217–307; these read KGFA…IKGE, MPLM…VKET, and DGLG…VKKL. 6 consecutive transmembrane segments (helical) span residues 6 to 26, 77 to 97, 123 to 143, 182 to 202, 223 to 243, and 280 to 300; these read FAEGGIASIVAGCSTHPLDLI, MRALFSGVSATVLRQTLYSTT, IGAGAIAGAIGAAVGNPADVA, RGSSLTINRAMLVTSSQLASY, VSASFAAGFVASVASNPVDVI, and YKGFIPTVSRQAPFTVVLFVT.

The protein belongs to the mitochondrial carrier (TC 2.A.29) family. Expressed in roots, leaves, stems and flowers.

It localises to the mitochondrion inner membrane. Its function is as follows. PUMPS are mitochondrial transporter proteins that create proton leaks across the inner mitochondrial membrane, thus uncoupling oxidative phosphorylation. This leads to a decrease in the efficiency of oxidative phosphorylation and an increase in heat production. May be involved in protecting plant cells against oxidative stress damage. Recombinant PUMP5, reconstituted into liposomes, transports a wide range of dicarboxylic acids including malate, oxaloacetate and succinate as well as phosphate, sulfate and thiosulfate. However, it is unknown if these transports are of any biological significance in vivo. The chain is Mitochondrial uncoupling protein 5 (PUMP5) from Arabidopsis thaliana (Mouse-ear cress).